Consider the following 361-residue polypeptide: G-protein coupled receptor 183 (361 aa).

At M1–R31 the chain is on the extracellular side. Residues I32–V57 form a helical membrane-spanning segment. Over Q58 to D77 the chain is Cytoplasmic. A helical membrane pass occupies residues I78–F95. Residue R87 coordinates 7alpha,25-dihydroxycholesterol. Residues D96 to R105 lie on the Extracellular side of the membrane. C104 and C181 are disulfide-bonded. Residues I106–I127 traverse the membrane as a helical segment. The 7alpha,25-dihydroxycholesterol site is built by Y112 and Y116. Residues S126 to V134 form an interaction with G proteins region. Residues D128 to K149 are Cytoplasmic-facing. Residues G150–I168 traverse the membrane as a helical segment. Topologically, residues N169–S192 are extracellular. Residues L193–C215 traverse the membrane as a helical segment. The Cytoplasmic portion of the chain corresponds to Y216–K241. The chain crosses the membrane as a helical span at residues A242–I265. Y260 is a binding site for 7alpha,25-dihydroxycholesterol. The Extracellular segment spans residues Q266 to Q287. The chain crosses the membrane as a helical span at residues I288–C312. Residues K313–K361 lie on the Cytoplasmic side of the membrane. S328 is subject to Phosphoserine. The interval E340–K361 is disordered. The span at E348 to K361 shows a compositional bias: polar residues.

This sequence belongs to the G-protein coupled receptor 1 family. As to quaternary structure, homodimer and heterodimer. Heterodimerizes with CXCR5; leading to modulate the interaction between of CXCL13 and CXCR5. As to expression, expressed abundantly in lymphoid tissues such as spleen and lymph node, and in B- and T-lymphocytes. Also highly expressed in lung, heart and gastrointestinal tract, and weakly expressed in the urogenital system and brain. Expressed in astrocytes.

It localises to the cell membrane. Functionally, G-protein coupled receptor expressed in lymphocytes that acts as a chemotactic receptor for B-cells, T-cells, splenic dendritic cells, monocytes/macrophages and astrocytes. Receptor for oxysterol 7-alpha,25-dihydroxycholesterol (7-alpha,25-OHC) and other related oxysterols. Mediates cell positioning and movement of a number of cells by binding the 7-alpha,25-OHC ligand that forms a chemotactic gradient. Binding of 7-alpha,25-OHC mediates the correct localization of B-cells during humoral immune responses. Guides B-cell movement along the B-cell zone-T-cell zone boundary and later to interfollicular and outer follicular regions. Its specific expression during B-cell maturation helps position B-cells appropriately for mounting T-dependent antibody responses. Collaborates with CXCR5 to mediate B-cell migration; probably by forming a heterodimer with CXCR5 that affects the interaction between of CXCL13 and CXCR5. Also acts as a chemotactic receptor for some T-cells upon binding to 7-alpha,25-OHC ligand. Promotes follicular helper T (Tfh) cells differentiation by positioning activated T-cells at the follicle-T-zone interface, promoting contact of newly activated CD4 T-cells with activated dendritic cells and exposing them to Tfh-cell-promoting inducible costimulator (ICOS) ligand. Expression in splenic dendritic cells is required for their homeostasis, localization and ability to induce B- and T-cell responses: GPR183 acts as a chemotactic receptor in dendritic cells that mediates the accumulation of CD4(+) dendritic cells in bridging channels. Regulates migration of astrocytes and is involved in communication between astrocytes and macrophages. Promotes osteoclast precursor migration to bone surfaces. Signals constitutively through G(i)-alpha, but not G(s)-alpha or G(q)-alpha. Signals constitutively also via MAPK1/3 (ERK1/2). The polypeptide is G-protein coupled receptor 183 (Homo sapiens (Human)).